The following is a 233-amino-acid chain: Proteasome subunit alpha (233 aa).

Belongs to the peptidase T1A family. In terms of assembly, the 20S proteasome core is composed of 14 alpha and 14 beta subunits that assemble into four stacked heptameric rings, resulting in a barrel-shaped structure. The two inner rings, each composed of seven catalytic beta subunits, are sandwiched by two outer rings, each composed of seven alpha subunits. The catalytic chamber with the active sites is on the inside of the barrel. Has a gated structure, the ends of the cylinder being occluded by the N-termini of the alpha-subunits. Is capped at one or both ends by the proteasome regulatory ATPase, PAN. In terms of processing, the N-terminus is blocked.

It localises to the cytoplasm. The formation of the proteasomal ATPase PAN-20S proteasome complex, via the docking of the C-termini of PAN into the intersubunit pockets in the alpha-rings, triggers opening of the gate for substrate entry. Interconversion between the open-gate and close-gate conformations leads to a dynamic regulation of the 20S proteasome proteolysis activity. Its function is as follows. Component of the proteasome core, a large protease complex with broad specificity involved in protein degradation. The T.acidophilum proteasome is able to cleave oligopeptides after Tyr, Leu, Phe, and to a lesser extent after Glu and Arg. Thus, displays chymotrypsin-like activity and low level of caspase-like and trypsin-like activities. This chain is Proteasome subunit alpha, found in Thermoplasma acidophilum (strain ATCC 25905 / DSM 1728 / JCM 9062 / NBRC 15155 / AMRC-C165).